We begin with the raw amino-acid sequence, 605 residues long: Podocalyxin-like protein 2 (605 aa).

Positions 1–32 are cleaved as a signal peptide; the sequence is MGRLLRAARLPPLLSPLLLLLVGGAFLGACVA. Over 33–500 the chain is Extracellular; it reads GSDEPGPEGL…ASQVRSDYGT (468 aa). S79 is a glycosylation site (O-linked (Xyl...) (chondroitin sulfate) serine). A sulfotyrosine mark is found at Y97 and Y118. An O-glycosylated at one site region spans residues 129–134; that stretch reads SIEDTS. A disordered region spans residues 129-347; it reads SIEDTSQAQE…PGDMELTPSS (219 aa). The O-linked (GalNAc...) serine glycan is linked to S144. Over residues 162–189 the composition is skewed to acidic residues; sequence EEEEEEEEEEEREKEEVEKQEEEEEEEL. The N-linked (GlcNAc...) asparagine glycan is linked to N193. The span at 207 to 217 shows a compositional bias: polar residues; sequence SLTSSSQTPGA. 2 stretches are compositionally biased toward low complexity: residues 241 to 255 and 288 to 298; these read PSLL…TVTP and EATAGAAGLSG. An N-linked (GlcNAc...) asparagine glycan is attached at N395. Residues 501–521 form a helical membrane-spanning segment; sequence LFVVLVVIGAICIIIIALGLL. The Cytoplasmic portion of the chain corresponds to 522–605; the sequence is YNCWQRRLPK…SDVFEEDTHL (84 aa). Positions 554-605 are disordered; that stretch reads LDVASDSQSEMQEKHPSLNGGGALNGPGSWGALMGGKRDPEDSDVFEEDTHL. S570 carries the post-translational modification Phosphoserine. The segment covering 572 to 582 has biased composition (gly residues); the sequence is NGGGALNGPGS. Over residues 594–605 the composition is skewed to acidic residues; sequence EDSDVFEEDTHL. Position 596 is a phosphoserine (S596).

Belongs to the podocalyxin family. As to quaternary structure, homodimer; disulfide-linked. Interacts with SELL, SELE and SELP. O-glycosylated; contains chondroitin sulfate. Displays sialylated O-linked oligosaccharides. In terms of processing, sulfation is necessary for interaction with SELL. Sialylated O-linked oligosaccharides are necessary for interaction with SELL, SELE and SELP. As to expression, expressed in T-cells, B-cells and monocytes. Expression is higher on memory and germinal center cells than on naive B-cells (at protein level). Highly expressed in brain. Moderately expressed in pancreas, kidney and lymphoid node. Weakly expressed in liver. Detected in both endothelial cells and CD34+ bone marrow cells.

Its subcellular location is the membrane. Functionally, acts as a ligand for vascular selectins. Mediates rapid rolling of leukocytes over vascular surfaces through high affinity divalent cation-dependent interactions with E-, P- and L-selectins. The protein is Podocalyxin-like protein 2 (PODXL2) of Homo sapiens (Human).